Here is a 175-residue protein sequence, read N- to C-terminus: Transcriptional repressor NrdR (175 aa).

A zinc finger lies at 3-32 (CPYCSHPDSKVIDSRDVDDGVRRRRECVVC). Positions 47 to 137 (LFVVKKDQRR…VYREFTDITQ (91 aa)) constitute an ATP-cone domain.

Belongs to the NrdR family. Zn(2+) serves as cofactor.

In terms of biological role, negatively regulates transcription of bacterial ribonucleotide reductase nrd genes and operons by binding to NrdR-boxes. The protein is Transcriptional repressor NrdR of Dehalococcoides mccartyi (strain CBDB1).